The sequence spans 784 residues: Repetin (784 aa).

The S-100-like stretch occupies residues 1–91 (MAQLLNSILS…VQACYHKLDN (91 aa)). 2 consecutive EF-hand domains span residues 13 to 48 (DVFHKYAKGNGDCALLCKEELKQLLLAEFGDILQRP) and 49 to 84 (NDPETVETILNLLDQDRDGHIDFHEYLLLVFQLVQA). Residues Glu-32, Asp-62, Asp-64, Asp-66, His-68, and Glu-73 each contribute to the Ca(2+) site. 4 disordered regions span residues 92 to 221 (KSHG…QAKW), 282 to 584 (GCGQ…SHYI), 601 to 661 (TEGT…HQHK), and 677 to 784 (RDWQ…NHQR). The span at 124–201 (RHEEERQNSH…FSFDQSERQS (78 aa)) shows a compositional bias: basic and acidic residues. 7 stretches are compositionally biased toward polar residues: residues 286–296 (TDRQGQSSHYG), 304–343 (SYHYGQTDRQGQSSHYSQTDRQGQSSHYSQPDRQGQSSHY), 356–392 (DQTNRQGQGSHYSQPNRQGQSSHYGQPDTQDQSSHYG), 400–486 (SSHY…QSSH), 504–584 (GQGQ…SHYI), 610–646 (VEQSGRSGRLSQQTPGQEGYQNQGQGFQSRDSQQNGH), and 680–695 (QSCSSEQGHRQAQTRQ). 2 stretches are compositionally biased toward basic and acidic residues: residues 704–722 (WAEEEQGHQTWDRHSHESQ) and 729–784 (QDRR…NHQR).

It belongs to the S100-fused protein family. Potential substrate of transglutaminase. Some arginines are probably converted to citrullines by peptidylarginine deimidase. As to expression, expression is scattered in the normal epidermis but strong in the acrosyringium, the inner hair root sheath and in the filiform papilli of the tongue.

Its subcellular location is the secreted. The protein localises to the extracellular space. It localises to the extracellular matrix. In terms of biological role, involved in the cornified cell envelope formation. Multifunctional epidermal matrix protein. Reversibly binds calcium. The sequence is that of Repetin (RPTN) from Homo sapiens (Human).